Consider the following 1104-residue polypeptide: Translation initiation factor IF-2 (1104 aa).

Disordered stretches follow at residues 51–444 and 461–497; these read SLLG…LAAQ and LARP…RRRA. Composition is skewed to low complexity over residues 60–119 and 127–164; these read AKPA…KPQA and ATPK…AAKP. Over residues 189-202 the composition is skewed to pro residues; it reads APTPRPTPARPTPR. 4 stretches are compositionally biased toward low complexity: residues 203-215, 227-246, 311-336, and 366-396; these read PAGA…PTPG, GAPS…KPGA, STTG…PAGM, and PTKA…SFRP. Residues 406–420 are compositionally biased toward basic and acidic residues; sequence GRPDWDDSARLDALR. Residues 481–495 are compositionally biased toward basic residues; it reads MRKRKKETARQRQRR. Positions 596 to 768 constitute a tr-type G domain; it reads RRPPVVTVMG…LLLVTEVEDL (173 aa). The segment at 605-612 is G1; the sequence is GHVDHGKT. 605–612 is a binding site for GTP; the sequence is GHVDHGKT. A G2 region spans residues 630-634; it reads GITQH. The segment at 655–658 is G3; that stretch reads DTPG. Residues 655–659 and 709–712 each bind GTP; these read DTPGH and NKID. Residues 709 to 712 are G4; that stretch reads NKID. The interval 745 to 747 is G5; the sequence is SAI.

This sequence belongs to the TRAFAC class translation factor GTPase superfamily. Classic translation factor GTPase family. IF-2 subfamily.

The protein resides in the cytoplasm. One of the essential components for the initiation of protein synthesis. Protects formylmethionyl-tRNA from spontaneous hydrolysis and promotes its binding to the 30S ribosomal subunits. Also involved in the hydrolysis of GTP during the formation of the 70S ribosomal complex. This chain is Translation initiation factor IF-2, found in Synechococcus sp. (strain CC9605).